The chain runs to 397 residues: Tyrosine aminotransferase (397 aa).

Substrate-binding residues include Gly-34, Tyr-66, Trp-131, and Asn-184. Lys-247 carries the N6-(pyridoxal phosphate)lysine modification. Substrate is bound at residue Arg-375.

This sequence belongs to the class-I pyridoxal-phosphate-dependent aminotransferase family. In terms of assembly, homodimer. Requires pyridoxal 5'-phosphate as cofactor.

The enzyme catalyses L-tyrosine + 2-oxoglutarate = 3-(4-hydroxyphenyl)pyruvate + L-glutamate. It carries out the reaction 4-methylsulfanyl-2-oxobutanoate + L-tyrosine = 3-(4-hydroxyphenyl)pyruvate + L-methionine. It catalyses the reaction an aromatic L-alpha-amino acid + 2-oxoglutarate = an aromatic oxo-acid + L-glutamate. The catalysed reaction is L-aspartate + 2-oxoglutarate = oxaloacetate + L-glutamate. Its pathway is amino-acid biosynthesis; L-methionine biosynthesis via salvage pathway; L-methionine from S-methyl-5-thio-alpha-D-ribose 1-phosphate: step 6/6. Its activity is regulated as follows. Inhibited by malate and nitrotyrosine by approximately 20% at the higher concentration. At 100 uM, canaline and carboxymethoxylamine inhibit aminotransferase activity by 35 and 70%, respectively. Addition of 1.0 mM carboxymethoxylamine lead to a complete inhibition of the aminotransferase activity. In terms of biological role, catalyzes the formation of methionine from 2-keto-4-methylthiobutyrate (KMTB) primarily using aromatic amino acids (tyrosine, phenylalanine and tryptophan) or glutamate as the amino donors. Histidine, leucine, asparagine, or arginine are also functional amino donors but to a lesser extent. Can also use alpha-ketoglutarate, oxaloacetate and pyruvate as the amino acceptors. In Klebsiella pneumoniae, this protein is Tyrosine aminotransferase (tyrB).